The primary structure comprises 20 residues: Fibrinogen beta chain (20 aa).

The tract at residues 1 to 20 (ATDYEDEEFPGAVPPSVGAR) is disordered. Residue threonine 2 is glycosylated (O-linked (GalNAc...) threonine). Residue tyrosine 4 is modified to Sulfotyrosine.

As to quaternary structure, heterohexamer; disulfide linked. Contains 2 sets of 3 non-identical chains (alpha, beta and gamma). The 2 heterotrimers are in head to head conformation with the N-termini in a small central domain. Conversion of fibrinogen to fibrin is triggered by thrombin, which cleaves fibrinopeptides A and B from alpha and beta chains, and thus exposes the N-terminal polymerization sites responsible for the formation of the soft clot.

The protein localises to the secreted. Cleaved by the protease thrombin to yield monomers which, together with fibrinogen alpha (FGA) and fibrinogen gamma (FGG), polymerize to form an insoluble fibrin matrix. Fibrin has a major function in hemostasis as one of the primary components of blood clots. In addition, functions during the early stages of wound repair to stabilize the lesion and guide cell migration during re-epithelialization. Was originally thought to be essential for platelet aggregation, based on in vitro studies using anticoagulated blood. However subsequent studies have shown that it is not absolutely required for thrombus formation in vivo. Enhances expression of SELP in activated platelets. Maternal fibrinogen is essential for successful pregnancy. Fibrin deposition is also associated with infection, where it protects against IFNG-mediated hemorrhage. May also facilitate the antibacterial immune response via both innate and T-cell mediated pathways. The chain is Fibrinogen beta chain (FGB) from Elephas maximus (Indian elephant).